A 299-amino-acid polypeptide reads, in one-letter code: Aspartate carbamoyltransferase catalytic subunit (299 aa).

2 residues coordinate carbamoyl phosphate: Arg54 and Thr55. Lys83 lines the L-aspartate pocket. Residues Arg104, His132, and Gln135 each contribute to the carbamoyl phosphate site. L-aspartate-binding residues include Arg165 and Arg222. Carbamoyl phosphate is bound by residues Leu261 and Pro262.

The protein belongs to the aspartate/ornithine carbamoyltransferase superfamily. ATCase family. As to quaternary structure, heterooligomer of catalytic and regulatory chains.

It catalyses the reaction carbamoyl phosphate + L-aspartate = N-carbamoyl-L-aspartate + phosphate + H(+). The protein operates within pyrimidine metabolism; UMP biosynthesis via de novo pathway; (S)-dihydroorotate from bicarbonate: step 2/3. Functionally, catalyzes the condensation of carbamoyl phosphate and aspartate to form carbamoyl aspartate and inorganic phosphate, the committed step in the de novo pyrimidine nucleotide biosynthesis pathway. This is Aspartate carbamoyltransferase catalytic subunit from Archaeoglobus fulgidus (strain ATCC 49558 / DSM 4304 / JCM 9628 / NBRC 100126 / VC-16).